Reading from the N-terminus, the 191-residue chain is Inosine triphosphate pyrophosphatase (191 aa).

12-17 (TGNANK) is a binding site for ITP. Residue glutamate 42 participates in Mg(2+) binding. Residues lysine 54, 70-71 (DT), lysine 87, 145-148 (FGWD), lysine 168, and 173-174 (HR) each bind ITP.

It belongs to the HAM1 NTPase family. Homodimer. Requires Mg(2+) as cofactor. The cofactor is Mn(2+).

The protein localises to the cytoplasm. It carries out the reaction ITP + H2O = IMP + diphosphate + H(+). The catalysed reaction is dITP + H2O = dIMP + diphosphate + H(+). It catalyses the reaction XTP + H2O = XMP + diphosphate + H(+). In terms of biological role, pyrophosphatase that hydrolyzes non-canonical purine nucleotides such as inosine triphosphate (ITP), deoxyinosine triphosphate (dITP) or xanthosine 5'-triphosphate (XTP) to their respective monophosphate derivatives. The enzyme does not distinguish between the deoxy- and ribose forms. Probably excludes non-canonical purines from RNA and DNA precursor pools, thus preventing their incorporation into RNA and DNA and avoiding chromosomal lesions. This chain is Inosine triphosphate pyrophosphatase, found in Phytophthora infestans (strain T30-4) (Potato late blight agent).